The sequence spans 284 residues: Bifunctional protein FolD (284 aa).

NADP(+)-binding positions include 166–168, serine 191, and isoleucine 232; that span reads GAS.

The protein belongs to the tetrahydrofolate dehydrogenase/cyclohydrolase family. In terms of assembly, homodimer.

It catalyses the reaction (6R)-5,10-methylene-5,6,7,8-tetrahydrofolate + NADP(+) = (6R)-5,10-methenyltetrahydrofolate + NADPH. The enzyme catalyses (6R)-5,10-methenyltetrahydrofolate + H2O = (6R)-10-formyltetrahydrofolate + H(+). The protein operates within one-carbon metabolism; tetrahydrofolate interconversion. In terms of biological role, catalyzes the oxidation of 5,10-methylenetetrahydrofolate to 5,10-methenyltetrahydrofolate and then the hydrolysis of 5,10-methenyltetrahydrofolate to 10-formyltetrahydrofolate. The sequence is that of Bifunctional protein FolD from Neisseria gonorrhoeae (strain ATCC 700825 / FA 1090).